We begin with the raw amino-acid sequence, 202 residues long: MDYFPMIFALLFVAFQGAPEAAVLGTELSTGAESGGERPVPTTPWRPRRSKRCSCSSLMDKECVYFCHLDIIWVNTPEHVVPYGLGSPSRSKRSLKDFFPTKATVHRKRCQCASQTDKKCQNFCQAGKELKDQDSMEKAWDNRKRGKDCPKLGEKCLQQQLVVGRKTRRLETISNSIKTSFRVAKLKAQLYRDKKVIYSRAH.

The first 25 residues, 1–25, serve as a signal peptide directing secretion; sequence MDYFPMIFALLFVAFQGAPEAAVLG. A propeptide spanning residues 26-50 is cleaved from the precursor; the sequence is TELSTGAESGGERPVPTTPWRPRRS. The interval 29–48 is disordered; the sequence is STGAESGGERPVPTTPWRPR. Cystine bridges form between Cys53–Cys67 and Cys55–Cys63. Positions 74–202 are excised as a propeptide; that stretch reads VNTPEHVVPY…DKKVIYSRAH (129 aa). Residues 110–124 are endothelin-like; sequence CQCASQTDKKCQNFC.

The protein belongs to the endothelin/sarafotoxin family.

The protein resides in the secreted. Its function is as follows. Endothelins are endothelium-derived vasoconstrictor peptides. Probable ligand for G-protein coupled receptors EDNRA and EDNRB which activates PTK2B, BCAR1, BCAR3 and, GTPases RAP1 and RHOA cascade in glomerular mesangial cells. Also binds the DEAR/FBXW7-AS1 receptor. Promotes mesenteric arterial wall remodeling via activation of ROCK signaling and subsequent colocalization of NFATC3 with F-actin filaments. NFATC3 then translocates to the nucleus where it subsequently promotes the transcription of the smooth muscle hypertrophy and differentiation marker ACTA2. The sequence is that of Endothelin-1 (EDN1) from Ovis aries (Sheep).